Reading from the N-terminus, the 359-residue chain is Peptide chain release factor 1 (359 aa).

Glutamine 235 bears the N5-methylglutamine mark. Residues 282-306 (RQRADSERSADRKSQVGSGDRSERI) form a disordered region.

It belongs to the prokaryotic/mitochondrial release factor family. Methylated by PrmC. Methylation increases the termination efficiency of RF1.

The protein resides in the cytoplasm. Functionally, peptide chain release factor 1 directs the termination of translation in response to the peptide chain termination codons UAG and UAA. The sequence is that of Peptide chain release factor 1 from Rhizobium rhizogenes (strain K84 / ATCC BAA-868) (Agrobacterium radiobacter).